Consider the following 81-residue polypeptide: Photosystem I iron-sulfur center (81 aa).

4Fe-4S ferredoxin-type domains follow at residues 2 to 31 (SHTV…MAPW) and 39 to 68 (VASA…VRVY). Residues cysteine 11, cysteine 14, cysteine 17, cysteine 21, cysteine 48, cysteine 51, cysteine 54, and cysteine 58 each contribute to the [4Fe-4S] cluster site.

The eukaryotic PSI reaction center is composed of at least 11 subunits. Requires [4Fe-4S] cluster as cofactor.

It is found in the plastid. The protein resides in the chloroplast thylakoid membrane. It carries out the reaction reduced [plastocyanin] + hnu + oxidized [2Fe-2S]-[ferredoxin] = oxidized [plastocyanin] + reduced [2Fe-2S]-[ferredoxin]. Its function is as follows. Apoprotein for the two 4Fe-4S centers FA and FB of photosystem I (PSI); essential for photochemical activity. FB is the terminal electron acceptor of PSI, donating electrons to ferredoxin. The C-terminus interacts with PsaA/B/D and helps assemble the protein into the PSI complex. Required for binding of PsaD and PsaE to PSI. PSI is a plastocyanin/cytochrome c6-ferredoxin oxidoreductase, converting photonic excitation into a charge separation, which transfers an electron from the donor P700 chlorophyll pair to the spectroscopically characterized acceptors A0, A1, FX, FA and FB in turn. This Tupiella akineta (Green alga) protein is Photosystem I iron-sulfur center.